The sequence spans 268 residues: Undecaprenyl-diphosphatase (268 aa).

7 helical membrane-spanning segments follow: residues 43 to 63, 85 to 105, 108 to 128, 141 to 161, 184 to 204, 217 to 237, and 246 to 266; these read FWKTFAVLIQLGAILAILAIY, IGVLVAFLPAVILGLIFGTFI, VLFNPWVVCFSLIAGGAVLLW, AMAFPLPMYLGIGIAQCAAMV, AAEFSFFLAIPTMLGAFVYDV, FIIIVGFVVSFITAIVVVKTF, and FTFFAWWRVIVGTLGLIALAL.

Belongs to the UppP family.

Its subcellular location is the cell inner membrane. The catalysed reaction is di-trans,octa-cis-undecaprenyl diphosphate + H2O = di-trans,octa-cis-undecaprenyl phosphate + phosphate + H(+). Catalyzes the dephosphorylation of undecaprenyl diphosphate (UPP). Confers resistance to bacitracin. This chain is Undecaprenyl-diphosphatase, found in Afipia carboxidovorans (strain ATCC 49405 / DSM 1227 / KCTC 32145 / OM5) (Oligotropha carboxidovorans).